A 233-amino-acid chain; its full sequence is Probable translation initiation factor, mitochondrial (233 aa).

Residues 1–39 (MNSYLQFPHRKLFIQFSYSLTSVFRKCQSRTFMNSQFAS) constitute a mitochondrion transit peptide.

It belongs to the IF-3 family.

It localises to the mitochondrion. May be involved in mitochondrial translation initiation. The polypeptide is Probable translation initiation factor, mitochondrial (Schizosaccharomyces pombe (strain 972 / ATCC 24843) (Fission yeast)).